A 549-amino-acid polypeptide reads, in one-letter code: Glucose-6-phosphate isomerase (549 aa).

E353 functions as the Proton donor in the catalytic mechanism. Active-site residues include H384 and K512.

This sequence belongs to the GPI family.

Its subcellular location is the cytoplasm. It carries out the reaction alpha-D-glucose 6-phosphate = beta-D-fructose 6-phosphate. Its pathway is carbohydrate biosynthesis; gluconeogenesis. The protein operates within carbohydrate degradation; glycolysis; D-glyceraldehyde 3-phosphate and glycerone phosphate from D-glucose: step 2/4. In terms of biological role, catalyzes the reversible isomerization of glucose-6-phosphate to fructose-6-phosphate. In Solidesulfovibrio magneticus (strain ATCC 700980 / DSM 13731 / RS-1) (Desulfovibrio magneticus), this protein is Glucose-6-phosphate isomerase.